The following is a 505-amino-acid chain: L-carnitine/gamma-butyrobetaine antiporter (505 aa).

12 consecutive transmembrane segments (helical) span residues 10-30 (IEPK…WLTV), 51-71 (WGWA…WLVF), 92-112 (IFMM…SIEI), 143-163 (GPLP…FFFV), 195-215 (FYLV…TPLV), 231-251 (LDAI…ACGL), 263-283 (SYLS…SFIM), 316-336 (WTVF…IFLA), 347-367 (LCFG…TVLG), 403-423 (LSTA…VTLI), 446-466 (LLVR…LLAL), and 475-495 (AIIA…LSFI).

It belongs to the BCCT transporter (TC 2.A.15) family. CaiT subfamily. As to quaternary structure, homotrimer.

It is found in the cell inner membrane. The enzyme catalyses 4-(trimethylamino)butanoate(in) + (R)-carnitine(out) = 4-(trimethylamino)butanoate(out) + (R)-carnitine(in). Its pathway is amine and polyamine metabolism; carnitine metabolism. Its function is as follows. Catalyzes the exchange of L-carnitine for gamma-butyrobetaine. This Salmonella typhi protein is L-carnitine/gamma-butyrobetaine antiporter.